Here is a 488-residue protein sequence, read N- to C-terminus: Cysteine--tRNA ligase (488 aa).

Position 40 (Cys40) interacts with Zn(2+). The short motif at 42–52 is the 'HIGH' region element; the sequence is MTVYDYCHIGH. Zn(2+) is bound by residues Cys221, His246, and Glu250. The 'KMSKS' region signature appears at 278–282; sequence KMSKS. Lys281 provides a ligand contact to ATP.

This sequence belongs to the class-I aminoacyl-tRNA synthetase family. In terms of assembly, monomer. Zn(2+) is required as a cofactor.

The protein resides in the cytoplasm. It catalyses the reaction tRNA(Cys) + L-cysteine + ATP = L-cysteinyl-tRNA(Cys) + AMP + diphosphate. The polypeptide is Cysteine--tRNA ligase (Psychrobacter cryohalolentis (strain ATCC BAA-1226 / DSM 17306 / VKM B-2378 / K5)).